The chain runs to 467 residues: MPYRIPRLFISATRKSSGKTFIAVGLTAALSARGLVVQPFKKGPDYIDPRWHSLAAGRECRNLDDFIMGRPKVLTSFVAHAQGADVAIIEGNLGLFDGQDLEGSDSSAALAKALGAPVLLVVDCKHLARSVAPLVCGHLHFPGGETIVGIILNNVATPRQEKRLREAIERFCPIPILGAIPRSAEIMIDERHLGLVPANEKQGAPHTVETMGRMMESHLDLDRLVALAATATPLALPDNPPALASKAPLVGGRPVRVGYAADQAFSFYYPDNLEALRQNGVELVPFSLLDEQPLPQVDGLYIGGGFPEMFMEHLQQNRATLETIRTRSELGMPIYAECGGLMVLSQRLIWAGKRVELAGALPIEITMHPKPQGYGYMKIHGTGALPWPPVDQEICCHEFHYSKVSKLGEGVRFAYQVTRGSGVDGWHDGILYHNIFASYAHIHVEGAPEWAPFLARFWRERGSFSQP.

One can recognise a GATase cobBQ-type domain in the interval 256 to 449; it reads RVGYAADQAF…AHIHVEGAPE (194 aa). C338 serves as the catalytic Nucleophile.

Belongs to the CobB/CbiA family. It depends on Mg(2+) as a cofactor.

It catalyses the reaction cob(II)yrinate + 2 L-glutamine + 2 ATP + 2 H2O = cob(II)yrinate a,c diamide + 2 L-glutamate + 2 ADP + 2 phosphate + 2 H(+). It participates in cofactor biosynthesis; adenosylcobalamin biosynthesis; cob(II)yrinate a,c-diamide from sirohydrochlorin (anaerobic route): step 10/10. Its function is as follows. Catalyzes the ATP-dependent amidation of the two carboxylate groups at positions a and c of cobyrinate, using either L-glutamine or ammonia as the nitrogen source. This chain is Cobyrinate a,c-diamide synthase, found in Magnetococcus marinus (strain ATCC BAA-1437 / JCM 17883 / MC-1).